We begin with the raw amino-acid sequence, 201 residues long: ATP-dependent Clp protease proteolytic subunit (201 aa).

Ser-97 functions as the Nucleophile in the catalytic mechanism. His-122 is a catalytic residue.

It belongs to the peptidase S14 family. Fourteen ClpP subunits assemble into 2 heptameric rings which stack back to back to give a disk-like structure with a central cavity, resembling the structure of eukaryotic proteasomes.

It is found in the cytoplasm. The enzyme catalyses Hydrolysis of proteins to small peptides in the presence of ATP and magnesium. alpha-casein is the usual test substrate. In the absence of ATP, only oligopeptides shorter than five residues are hydrolyzed (such as succinyl-Leu-Tyr-|-NHMec, and Leu-Tyr-Leu-|-Tyr-Trp, in which cleavage of the -Tyr-|-Leu- and -Tyr-|-Trp bonds also occurs).. Cleaves peptides in various proteins in a process that requires ATP hydrolysis. Has a chymotrypsin-like activity. Plays a major role in the degradation of misfolded proteins. In Nitratidesulfovibrio vulgaris (strain DSM 19637 / Miyazaki F) (Desulfovibrio vulgaris), this protein is ATP-dependent Clp protease proteolytic subunit.